Here is a 148-residue protein sequence, read N- to C-terminus: Gag-Pol polyprotein (148 aa).

One can recognise an Integrase catalytic domain in the interval 1–64; it reads IPYNPQSQGV…SAGERIIDII (64 aa). Glutamate 12 is a binding site for Mg(2+). The segment at residues 83-130 is a DNA-binding region (integrase-type); the sequence is FRVYYRDSRDPIWKGPAKLLWKGEGAVVIQDNSDIKVVPRRKVKIIRD.

In terms of assembly, homotetramer; may further associate as a homohexadecamer. Part of the pre-integration complex (PIC) which is composed of viral genome, matrix protein, Vpr and integrase. Interacts with human SMARCB1/INI1 and human PSIP1/LEDGF isoform 1. Interacts with human KPNA3; this interaction might play a role in nuclear import of the pre-integration complex. Interacts with human NUP153; this interaction might play a role in nuclear import of the pre-integration complex. Post-translationally, specific enzymatic cleavages by the viral protease yield mature proteins.

In terms of biological role, catalyzes viral DNA integration into the host chromosome, by performing a series of DNA cutting and joining reactions. This enzyme activity takes place after virion entry into a cell and reverse transcription of the RNA genome in dsDNA. The first step in the integration process is 3' processing. This step requires a complex comprising the viral genome, matrix protein, Vpr and integrase. This complex is called the pre-integration complex (PIC). The integrase protein removes 2 nucleotides from each 3' end of the viral DNA, leaving recessed CA OH's at the 3' ends. In the second step, the PIC enters cell nucleus. This process is mediated through integrase and Vpr proteins, and allows the virus to infect a non dividing cell. This ability to enter the nucleus is specific of lentiviruses, other retroviruses cannot and rely on cell division to access cell chromosomes. In the third step, termed strand transfer, the integrase protein joins the previously processed 3' ends to the 5' ends of strands of target cellular DNA at the site of integration. The 5'-ends are produced by integrase-catalyzed staggered cuts, 5 bp apart. A Y-shaped, gapped, recombination intermediate results, with the 5'-ends of the viral DNA strands and the 3' ends of target DNA strands remaining unjoined, flanking a gap of 5 bp. The last step is viral DNA integration into host chromosome. This involves host DNA repair synthesis in which the 5 bp gaps between the unjoined strands are filled in and then ligated. Since this process occurs at both cuts flanking the HIV genome, a 5 bp duplication of host DNA is produced at the ends of HIV-1 integration. Alternatively, Integrase may catalyze the excision of viral DNA just after strand transfer, this is termed disintegration. The polypeptide is Gag-Pol polyprotein (gag-pol) (Homo sapiens (Human)).